The primary structure comprises 214 residues: Melanoregulin (214 aa).

The Cholesterol-binding sequence motif signature appears at 162 to 172 (LSERYLFVVDR). The residue at position 213 (S213) is a Phosphoserine.

Belongs to the melanoregulin family. In terms of assembly, identified in a complex with RILP and DCTN1; interacts directly with RILP, but does not interact directly with DCTN1. Interacts with PRPH2. In terms of processing, palmitoylated. Palmitoylation is required to maintain the protein at the melanosome membrane. Expressed in photoreceptor cells (at protein level).

It localises to the apical cell membrane. The protein localises to the melanosome membrane. The protein resides in the lysosome membrane. It is found in the cytoplasmic vesicle membrane. Functionally, probably functions as a cargo-recognition protein that couples cytoplasmic vesicles to the transport machinery. Plays a role in hair pigmentation, a process that involves shedding of melanosome-containing vesicles from melanocytes, followed by phagocytosis of the melanosome-containing vesicles by keratinocytes. Functions on melanosomes as receptor for RILP and the complex formed by RILP and DCTN1, and thereby contributes to retrograde melanosome transport from the cell periphery to the center. Overexpression causes accumulation of late endosomes and/or lysosomes at the microtubule organising center (MTOC) at the center of the cell. Probably binds cholesterol and requires the presence of cholesterol in membranes to function in microtubule-mediated retrograde organelle transport. Binds phosphatidylinositol 3-phosphate, phosphatidylinositol 4-phosphate, phosphatidylinositol 5-phosphate and phosphatidylinositol 3,5-bisphosphate, but not phosphatidylinositol 3,4-bisphosphate or phosphatidylinositol 4,5-bisphosphate. Required for normal phagosome clearing and normal activation of lysosomal enzymes in lysosomes from retinal pigment epithelium cells. Required for normal degradation of the lipofuscin component N-retinylidene-N-retinylethanolamine (A2E) in the eye. May function in membrane fusion and regulate the biogenesis of disk membranes of photoreceptor rod cells. The chain is Melanoregulin (MREG) from Homo sapiens (Human).